The sequence spans 368 residues: Spermidine/putrescine import ATP-binding protein PotA (368 aa).

Residues 6–236 enclose the ABC transporter domain; it reads VSIKNVSKFF…PVNVFAATFI (231 aa). Residue 38–45 participates in ATP binding; the sequence is GPSGCGKT.

It belongs to the ABC transporter superfamily. Spermidine/putrescine importer (TC 3.A.1.11.1) family. The complex is composed of two ATP-binding proteins (PotA), two transmembrane proteins (PotB and PotC) and a solute-binding protein (PotD).

It localises to the cell inner membrane. It carries out the reaction ATP + H2O + polyamine-[polyamine-binding protein]Side 1 = ADP + phosphate + polyamineSide 2 + [polyamine-binding protein]Side 1.. Functionally, part of the ABC transporter complex PotABCD involved in spermidine/putrescine import. Responsible for energy coupling to the transport system. This is Spermidine/putrescine import ATP-binding protein PotA from Thermotoga maritima (strain ATCC 43589 / DSM 3109 / JCM 10099 / NBRC 100826 / MSB8).